Reading from the N-terminus, the 1205-residue chain is cGMP-specific 3',5'-cyclic phosphodiesterase (1205 aa).

A disordered region spans residues 1–153 (MTDVSSPAGG…TKASTTASQQ (153 aa)). The span at 18 to 32 (TTSSSPAATTSASSS) shows a compositional bias: low complexity. Polar residues predominate over residues 33-48 (KPLTNGANKTTISTTA). A compositionally biased stretch (low complexity) spans 62–71 (GAIPASSSSG). Over residues 83–94 (SNNNRPAATNRS) the composition is skewed to polar residues. Over residues 118 to 140 (SSSSPSQSPSQTQASIQTQTSQQ) the composition is skewed to low complexity. 2 consecutive GAF domains span residues 259–411 (DIDV…GIGI) and 443–624 (NLEC…GLGI). The PDEase domain maps to 654 to 1052 (SQDQTEKLTQ…RNWQDLAEKV (399 aa)). His-730 acts as the Proton donor in catalysis. A divalent metal cation-binding residues include His-734, His-770, Asp-771, and Asp-956. Disordered regions lie at residues 1093 to 1122 (QQSQHGSEDSHTPEHQRSGSRLSMKKTGAL) and 1152 to 1205 (SHVS…CALL). Basic and acidic residues-rich tracts occupy residues 1098–1109 (GSEDSHTPEHQR) and 1152–1162 (SHVSEDMDDKS). The span at 1171-1191 (ASGSMGRMSASSSTSSAGGQM) shows a compositional bias: low complexity. Residues 1195 to 1205 (SKKRSKLCALL) are compositionally biased toward basic residues. Cys-1202 is modified (cysteine methyl ester). Cys-1202 is lipidated: S-farnesyl cysteine. Residues 1203–1205 (ALL) constitute a propeptide, removed in mature form.

It belongs to the cyclic nucleotide phosphodiesterase family. In terms of assembly, interacts with PrBP. The cofactor is a divalent metal cation.

Its subcellular location is the cell membrane. It catalyses the reaction 3',5'-cyclic GMP + H2O = GMP + H(+). Functionally, has a role regulating cGMP transport in Malpighian tubule principal cells. This Drosophila sechellia (Fruit fly) protein is cGMP-specific 3',5'-cyclic phosphodiesterase.